The sequence spans 258 residues: tRNA (guanine-N(7)-)-methyltransferase (258 aa).

Residues Gly-76, 99-100 (EI), 132-133 (NA), and Leu-152 each bind S-adenosyl-L-methionine. The active site involves Asp-155. Residue 230–232 (TEE) coordinates S-adenosyl-L-methionine.

This sequence belongs to the class I-like SAM-binding methyltransferase superfamily. TrmB family.

It is found in the nucleus. The enzyme catalyses guanosine(46) in tRNA + S-adenosyl-L-methionine = N(7)-methylguanosine(46) in tRNA + S-adenosyl-L-homocysteine. The protein operates within tRNA modification; N(7)-methylguanine-tRNA biosynthesis. Its function is as follows. Catalyzes the formation of N(7)-methylguanine at position 46 (m7G46) in tRNA. The chain is tRNA (guanine-N(7)-)-methyltransferase from Brugia malayi (Filarial nematode worm).